The primary structure comprises 248 residues: Small ribosomal subunit protein uS5 (248 aa).

Residues 1–87 (MEDKKLSSAK…NPRFQRNNKD (87 aa)) are disordered. A compositionally biased stretch (low complexity) spans 8-23 (SAKPATSSKPAPKAPS). Basic and acidic residues predominate over residues 57–87 (VAFEKRNFTSGDKTKKPTDSKNPRFQRNNKD). Positions 94–157 (YEEKIVDIAR…KDAHNNLVEV (64 aa)) constitute an S5 DRBM domain.

Belongs to the universal ribosomal protein uS5 family. As to quaternary structure, part of the 30S ribosomal subunit. Contacts proteins S4 and S8.

Its function is as follows. With S4 and S12 plays an important role in translational accuracy. Located at the back of the 30S subunit body where it stabilizes the conformation of the head with respect to the body. This chain is Small ribosomal subunit protein uS5, found in Mycoplasmopsis synoviae (strain 53) (Mycoplasma synoviae).